We begin with the raw amino-acid sequence, 65 residues long: Small, acid-soluble spore protein Tlp (65 aa).

The protein belongs to the Tlp family.

Its subcellular location is the spore core. This Bacillus anthracis (strain A0248) protein is Small, acid-soluble spore protein Tlp.